Here is a 178-residue protein sequence, read N- to C-terminus: Endothelin-2 (178 aa).

The N-terminal stretch at 1-24 (MVSVPTTWCSVALALLVALHEGKG) is a signal peptide. The propeptide occupies 25 to 46 (QAAATLEQPASSSHAQGTHLRL). 2 cysteine pairs are disulfide-bonded: C49/C63 and C51/C59. A propeptide spanning residues 70–178 (VNTPEQTAPY…RSTHSRWRKR (109 aa)) is cleaved from the precursor. Residues 96–111 (CQCSSARDPACATFCL) are endothelin-like. A disordered region spans residues 159–178 (KRQQEAMREPRSTHSRWRKR). The span at 160–170 (RQQEAMREPRS) shows a compositional bias: basic and acidic residues.

The protein belongs to the endothelin/sarafotoxin family. In terms of tissue distribution, expressed in lung, but not in placental stem villi vessels or cultured placental villi smooth muscle cells.

It localises to the secreted. Endothelins are endothelium-derived vasoconstrictor peptides. In Homo sapiens (Human), this protein is Endothelin-2 (EDN2).